The chain runs to 269 residues: Probable ribosomal RNA small subunit methyltransferase A (269 aa).

His-19, Leu-21, Gly-46, Glu-67, Asp-92, and Asn-107 together coordinate S-adenosyl-L-methionine.

This sequence belongs to the class I-like SAM-binding methyltransferase superfamily. rRNA adenine N(6)-methyltransferase family. RsmA subfamily.

It localises to the cytoplasm. In terms of biological role, specifically dimethylates two adjacent adenosines in the loop of a conserved hairpin near the 3'-end of 16S rRNA in the 30S particle. May play a critical role in biogenesis of 30S subunits. In Methanosarcina acetivorans (strain ATCC 35395 / DSM 2834 / JCM 12185 / C2A), this protein is Probable ribosomal RNA small subunit methyltransferase A.